Reading from the N-terminus, the 68-residue chain is Protein SlyX homolog (68 aa).

It belongs to the SlyX family.

In Brucella suis (strain ATCC 23445 / NCTC 10510), this protein is Protein SlyX homolog.